The following is a 231-amino-acid chain: Sugar fermentation stimulation protein homolog (231 aa).

The protein belongs to the SfsA family.

The sequence is that of Sugar fermentation stimulation protein homolog from Geotalea daltonii (strain DSM 22248 / JCM 15807 / FRC-32) (Geobacter daltonii).